The sequence spans 165 residues: Fibrinogen-binding protein (165 aa).

The signal sequence occupies residues 1–29; the sequence is MKNKLIAKSLLTLAAIGITTTTIASTADA.

In terms of assembly, interacts with host fibrinogen alpha chain/FGA. Interacts with host complement protein C3.

It is found in the secreted. Its function is as follows. Extracellular fibrinogen-binding protein that plays an important role in virulence. By interacting with the alpha chain of fibrinogen and its derivative fibrin, enhances a non-functional interaction between fibrinogen and platelets and is responsible for repression of fibrinogen-dependent platelet aggregation. In addition, assembles a fibrinogen protective shield around the bacteria which results in impaired phagocytic clearance by the host. Mechanistically, interacts with host complement C3b deposited on the surface of the bacterium via its C-terminal and then recruits fibrinogen via its N-terminal. The sequence is that of Fibrinogen-binding protein (fib) from Staphylococcus aureus (strain Newman).